The following is a 434-amino-acid chain: Glutamyl-tRNA reductase (434 aa).

Substrate is bound by residues 49-52, Ser114, 119-121, and Gln125; these read TCNR and EPQ. The Nucleophile role is filled by Cys50. 199–204 lines the NADP(+) pocket; that stretch reads GAGETI.

The protein belongs to the glutamyl-tRNA reductase family. As to quaternary structure, homodimer.

It catalyses the reaction (S)-4-amino-5-oxopentanoate + tRNA(Glu) + NADP(+) = L-glutamyl-tRNA(Glu) + NADPH + H(+). Its pathway is porphyrin-containing compound metabolism; protoporphyrin-IX biosynthesis; 5-aminolevulinate from L-glutamyl-tRNA(Glu): step 1/2. Functionally, catalyzes the NADPH-dependent reduction of glutamyl-tRNA(Glu) to glutamate 1-semialdehyde (GSA). The polypeptide is Glutamyl-tRNA reductase (Pasteurella multocida (strain Pm70)).